Consider the following 1027-residue polypeptide: Error-prone DNA polymerase (1027 aa).

Belongs to the DNA polymerase type-C family. DnaE2 subfamily.

It is found in the cytoplasm. The enzyme catalyses DNA(n) + a 2'-deoxyribonucleoside 5'-triphosphate = DNA(n+1) + diphosphate. DNA polymerase involved in damage-induced mutagenesis and translesion synthesis (TLS). It is not the major replicative DNA polymerase. In Dechloromonas aromatica (strain RCB), this protein is Error-prone DNA polymerase.